A 129-amino-acid polypeptide reads, in one-letter code: Small ribosomal subunit protein uS11 (129 aa).

The protein belongs to the universal ribosomal protein uS11 family. Part of the 30S ribosomal subunit. Interacts with proteins S7 and S18. Binds to IF-3.

Located on the platform of the 30S subunit, it bridges several disparate RNA helices of the 16S rRNA. Forms part of the Shine-Dalgarno cleft in the 70S ribosome. In Rhizorhabdus wittichii (strain DSM 6014 / CCUG 31198 / JCM 15750 / NBRC 105917 / EY 4224 / RW1) (Sphingomonas wittichii), this protein is Small ribosomal subunit protein uS11.